The chain runs to 425 residues: Enolase (425 aa).

Residue glutamine 162 coordinates (2R)-2-phosphoglycerate. Glutamate 204 acts as the Proton donor in catalysis. The Mg(2+) site is built by aspartate 241, glutamate 284, and aspartate 311. 4 residues coordinate (2R)-2-phosphoglycerate: lysine 336, arginine 365, serine 366, and lysine 387. The Proton acceptor role is filled by lysine 336.

This sequence belongs to the enolase family. The cofactor is Mg(2+).

The protein localises to the cytoplasm. It localises to the secreted. It is found in the cell surface. It catalyses the reaction (2R)-2-phosphoglycerate = phosphoenolpyruvate + H2O. The protein operates within carbohydrate degradation; glycolysis; pyruvate from D-glyceraldehyde 3-phosphate: step 4/5. Its function is as follows. Catalyzes the reversible conversion of 2-phosphoglycerate (2-PG) into phosphoenolpyruvate (PEP). It is essential for the degradation of carbohydrates via glycolysis. The chain is Enolase from Brucella melitensis biotype 2 (strain ATCC 23457).